We begin with the raw amino-acid sequence, 910 residues long: Leucine--tRNA ligase (910 aa).

The 'HIGH' region motif lies at 42–52 (PYPSGKLHMGH). The short motif at 658–662 (TMSKS) is the 'KMSKS' region element. Lys-661 contacts ATP.

Belongs to the class-I aminoacyl-tRNA synthetase family.

Its subcellular location is the cytoplasm. The catalysed reaction is tRNA(Leu) + L-leucine + ATP = L-leucyl-tRNA(Leu) + AMP + diphosphate. The chain is Leucine--tRNA ligase from Acidovorax ebreus (strain TPSY) (Diaphorobacter sp. (strain TPSY)).